Here is a 311-residue protein sequence, read N- to C-terminus: Heme A synthase (311 aa).

The Cytoplasmic segment spans residues 1-6 (MQRFIK). Residues 7 to 27 (WLAVITSLDLLVVLLGGALVT) form a helical membrane-spanning segment. Over 28–62 (KTGSGQGCGKSWPLCNGEFVPSNLSMETIIELSHR) the chain is Extracellular. Cysteine 35 and cysteine 42 form a disulfide bridge. Residue glutamate 58 is part of the active site. Heme o is bound at residue histidine 61. Residues 63–83 (LTSGSAGILVTLLCILSWKYY) form a helical membrane-spanning segment. Residues 84–91 (KHVRETKT) lie on the Cytoplasmic side of the membrane. The chain crosses the membrane as a helical span at residues 92–112 (LAILSFVFLVAQALMGAAAVV). At 113–121 (WGQMPAVLA) the chain is on the extracellular side. Residues 122 to 142 (IHFGISLISFASVILLTCLIF) traverse the membrane as a helical segment. Histidine 123 provides a ligand contact to heme o. Residues 143–159 (EIDQKFDARSLIMDKKM) are Cytoplasmic-facing. The chain crosses the membrane as a helical span at residues 160–180 (KFHIYGVTIYSYIVVYTGALV). Over 181 to 211 (RHERATLACPDFPLCSKSRPMPTQLHEWVQM) the chain is Extracellular. A disulfide bridge links cysteine 189 with cysteine 195. A helical membrane pass occupies residues 212–232 (GHRVAAMLIFAWILYAMIIAI). A heme b-binding site is contributed by histidine 213. Over 233–243 (RHYKQQRVVYW) the chain is Cytoplasmic. The helical transmembrane segment at 244-264 (GWIISFILVTLQAIVGILVVF) threads the bilayer. Residues 265-271 (TNASLAM) are Extracellular-facing. A helical membrane pass occupies residues 272-292 (ALLHSLFISCLFAVLCYLVMI). Residue histidine 275 coordinates heme b. Topologically, residues 293 to 311 (GTRSTVNAKETESTSKQTK) are cytoplasmic.

The protein belongs to the COX15/CtaA family. Type 1 subfamily. As to quaternary structure, interacts with CtaB. Heme b serves as cofactor.

The protein resides in the cell membrane. The enzyme catalyses Fe(II)-heme o + 2 A + H2O = Fe(II)-heme a + 2 AH2. It functions in the pathway porphyrin-containing compound metabolism; heme A biosynthesis; heme A from heme O: step 1/1. Its function is as follows. Catalyzes the conversion of heme O to heme A by two successive hydroxylations of the methyl group at C8. The first hydroxylation forms heme I, the second hydroxylation results in an unstable dihydroxymethyl group, which spontaneously dehydrates, resulting in the formyl group of heme A. This is Heme A synthase from Bacillus mycoides (strain KBAB4) (Bacillus weihenstephanensis).